Here is a 142-residue protein sequence, read N- to C-terminus: Galactose-6-phosphate isomerase subunit LacA 2 (142 aa).

It belongs to the LacAB/RpiB family. Heteromultimeric protein consisting of LacA and LacB.

It carries out the reaction aldehydo-D-galactose 6-phosphate = keto-D-tagatose 6-phosphate. It functions in the pathway carbohydrate metabolism; D-galactose 6-phosphate degradation; D-tagatose 6-phosphate from D-galactose 6-phosphate: step 1/1. This Streptococcus pyogenes serotype M3 (strain ATCC BAA-595 / MGAS315) protein is Galactose-6-phosphate isomerase subunit LacA 2.